The sequence spans 202 residues: MVQRLCTSVAALSLALSACVFFPRAVMAIDLSRFYGHFNTKRSGDACRPYEPFKCPGDDTCISIQYLCDGAPDCQDGYDEDSRLCTAAKRPPVEETASFLQSLLASHGPNYLEKLFGTKARDTLKPLGGVNTVAIALSESQTIEDFGAALHLLRTDLEHLRSVFMAVENGDLGMLKSIGIKDSELGDVKFFLEKLVKTGFLD.

An N-terminal signal peptide occupies residues 1-28 (MVQRLCTSVAALSLALSACVFFPRAVMA). The region spanning 46 to 86 (ACRPYEPFKCPGDDTCISIQYLCDGAPDCQDGYDEDSRLCT) is the LDL-receptor class A domain. 3 disulfides stabilise this stretch: Cys47–Cys61, Cys55–Cys74, and Cys68–Cys85.

Its subcellular location is the secreted. The protein is Prohormone-4 of Apis mellifera (Honeybee).